The following is a 72-amino-acid chain: Translation initiation factor IF-1 (72 aa).

In terms of domain architecture, S1-like spans 1–72; sequence MSKEDMIEFS…TKGRITFRFK (72 aa).

This sequence belongs to the IF-1 family. Component of the 30S ribosomal translation pre-initiation complex which assembles on the 30S ribosome in the order IF-2 and IF-3, IF-1 and N-formylmethionyl-tRNA(fMet); mRNA recruitment can occur at any time during PIC assembly.

The protein localises to the cytoplasm. Its function is as follows. One of the essential components for the initiation of protein synthesis. Stabilizes the binding of IF-2 and IF-3 on the 30S subunit to which N-formylmethionyl-tRNA(fMet) subsequently binds. Helps modulate mRNA selection, yielding the 30S pre-initiation complex (PIC). Upon addition of the 50S ribosomal subunit IF-1, IF-2 and IF-3 are released leaving the mature 70S translation initiation complex. The protein is Translation initiation factor IF-1 of Acidiphilium cryptum (strain JF-5).